The primary structure comprises 71 residues: Beta-defensin 10 (71 aa).

The signal sequence occupies residues 1-23 (MKTLCSLLLIGCLLFSYDTPVVG). Disulfide bonds link cysteine 37–cysteine 66, cysteine 44–cysteine 59, and cysteine 49–cysteine 67.

It belongs to the beta-defensin family.

It is found in the secreted. Its function is as follows. Has antibacterial activity. The chain is Beta-defensin 10 (Defb10) from Rattus norvegicus (Rat).